Reading from the N-terminus, the 542-residue chain is CTP synthase (542 aa).

An amidoligase domain region spans residues 1–266 (MATNYIFVTG…DEFVCNRFHL (266 aa)). Ser-14 lines the CTP pocket. Residue Ser-14 coordinates UTP. Residues 15-20 (SLGKGI) and Asp-72 each bind ATP. Asp-72 and Glu-140 together coordinate Mg(2+). Residues 147–149 (DIE), 187–192 (KTKPTQ), and Lys-223 each bind CTP. Residues 187-192 (KTKPTQ) and Lys-223 contribute to the UTP site. 239 to 241 (KDV) serves as a coordination point for ATP. A Glutamine amidotransferase type-1 domain is found at 291–542 (TIGMVGKYVE…VKAAKENQKK (252 aa)). Gly-352 lines the L-glutamine pocket. Cys-379 serves as the catalytic Nucleophile; for glutamine hydrolysis. Residues 380-383 (LGMQ), Glu-403, and Arg-470 each bind L-glutamine. Active-site residues include His-515 and Glu-517.

The protein belongs to the CTP synthase family. In terms of assembly, homotetramer.

The enzyme catalyses UTP + L-glutamine + ATP + H2O = CTP + L-glutamate + ADP + phosphate + 2 H(+). The catalysed reaction is L-glutamine + H2O = L-glutamate + NH4(+). It carries out the reaction UTP + NH4(+) + ATP = CTP + ADP + phosphate + 2 H(+). It functions in the pathway pyrimidine metabolism; CTP biosynthesis via de novo pathway; CTP from UDP: step 2/2. With respect to regulation, allosterically activated by GTP, when glutamine is the substrate; GTP has no effect on the reaction when ammonia is the substrate. The allosteric effector GTP functions by stabilizing the protein conformation that binds the tetrahedral intermediate(s) formed during glutamine hydrolysis. Inhibited by the product CTP, via allosteric rather than competitive inhibition. In terms of biological role, catalyzes the ATP-dependent amination of UTP to CTP with either L-glutamine or ammonia as the source of nitrogen. Regulates intracellular CTP levels through interactions with the four ribonucleotide triphosphates. This is CTP synthase from Actinobacillus succinogenes (strain ATCC 55618 / DSM 22257 / CCUG 43843 / 130Z).